The following is a 169-amino-acid chain: Peptide methionine sulfoxide reductase MsrA (169 aa).

The active site involves Cys10.

This sequence belongs to the MsrA Met sulfoxide reductase family.

The enzyme catalyses L-methionyl-[protein] + [thioredoxin]-disulfide + H2O = L-methionyl-(S)-S-oxide-[protein] + [thioredoxin]-dithiol. The catalysed reaction is [thioredoxin]-disulfide + L-methionine + H2O = L-methionine (S)-S-oxide + [thioredoxin]-dithiol. Functionally, has an important function as a repair enzyme for proteins that have been inactivated by oxidation. Catalyzes the reversible oxidation-reduction of methionine sulfoxide in proteins to methionine. The chain is Peptide methionine sulfoxide reductase MsrA from Streptococcus pyogenes serotype M2 (strain MGAS10270).